The primary structure comprises 401 residues: Homocysteine-responsive endoplasmic reticulum-resident ubiquitin-like domain member 2 protein (401 aa).

One can recognise a Ubiquitin-like domain in the interval 10–89 (VTLIIKAPNQ…HMVHLVCASR (80 aa)). A disordered region spans residues 87–137 (ASRSPPSSPKSSTDGESHGALASSTNSNSDHSDSTTPSPSQESLSLVAGSS). Low complexity-rich tracts occupy residues 88–98 (SRSPPSSPKSS) and 109–126 (SSTN…PSPS). Residues 299 to 319 (FIMVMGAMLLVYLHQAGWFPF) traverse the membrane as a helical segment.

It is found in the membrane. Could be involved in the unfolded protein response (UPR) pathway. The protein is Homocysteine-responsive endoplasmic reticulum-resident ubiquitin-like domain member 2 protein (Herpud2) of Rattus norvegicus (Rat).